The chain runs to 388 residues: Succinate--CoA ligase [ADP-forming] subunit beta (388 aa).

The 236-residue stretch at 9-244 (KQLFAEYGLP…PSQDDAREAH (236 aa)) folds into the ATP-grasp domain. Residues Lys46, 53–55 (GRG), Glu99, Thr102, and Glu107 contribute to the ATP site. Asn199 and Asp213 together coordinate Mg(2+). Substrate-binding positions include Asn264 and 321–323 (GIV).

This sequence belongs to the succinate/malate CoA ligase beta subunit family. Heterotetramer of two alpha and two beta subunits. The cofactor is Mg(2+).

It catalyses the reaction succinate + ATP + CoA = succinyl-CoA + ADP + phosphate. The catalysed reaction is GTP + succinate + CoA = succinyl-CoA + GDP + phosphate. The protein operates within carbohydrate metabolism; tricarboxylic acid cycle; succinate from succinyl-CoA (ligase route): step 1/1. In terms of biological role, succinyl-CoA synthetase functions in the citric acid cycle (TCA), coupling the hydrolysis of succinyl-CoA to the synthesis of either ATP or GTP and thus represents the only step of substrate-level phosphorylation in the TCA. The beta subunit provides nucleotide specificity of the enzyme and binds the substrate succinate, while the binding sites for coenzyme A and phosphate are found in the alpha subunit. The sequence is that of Succinate--CoA ligase [ADP-forming] subunit beta from Pseudomonas aeruginosa (strain LESB58).